A 302-amino-acid polypeptide reads, in one-letter code: Acetylglutamate kinase (302 aa).

Substrate is bound by residues 75–76 (GG), arginine 97, and asparagine 198.

The protein belongs to the acetylglutamate kinase family. ArgB subfamily.

It localises to the cytoplasm. It catalyses the reaction N-acetyl-L-glutamate + ATP = N-acetyl-L-glutamyl 5-phosphate + ADP. The protein operates within amino-acid biosynthesis; L-arginine biosynthesis; N(2)-acetyl-L-ornithine from L-glutamate: step 2/4. In terms of biological role, catalyzes the ATP-dependent phosphorylation of N-acetyl-L-glutamate. This chain is Acetylglutamate kinase, found in Leifsonia xyli subsp. xyli (strain CTCB07).